The following is a 153-amino-acid chain: Pheromone-binding protein Gp-9 (153 aa).

Residues 1–19 (MKTFVLHIFIFAFVAFASA) form the signal peptide. 3 disulfide bridges follow: C37/C77, C73/C129, and C118/C138.

Belongs to the PBP/GOBP family. As to quaternary structure, homodimer.

It is found in the secreted. Its function is as follows. Colony queen number, a major feature of social organization, is associated with worker genotype for Gp-9. Colonies are headed by either a single reproductive queen (monogyne form) or multiple queens (polygyne form). Differences in worker Gp-9 genotypes between social forms may cause differences in workers' abilities to recognize queens and regulate their numbers. The protein is Pheromone-binding protein Gp-9 of Solenopsis geminata (Tropical fire ant).